The chain runs to 361 residues: Queuine tRNA-ribosyltransferase (361 aa).

Asp92 (proton acceptor) is an active-site residue. Residues Asp92–Phe96, Asp146, Gln189, and Gly216 contribute to the substrate site. The interval Gly247–Asp253 is RNA binding. Asp266 (nucleophile) is an active-site residue. The tract at residues Thr271 to Arg275 is RNA binding; important for wobble base 34 recognition. Positions 304, 306, 309, and 335 each coordinate Zn(2+).

Belongs to the queuine tRNA-ribosyltransferase family. In terms of assembly, homodimer. Within each dimer, one monomer is responsible for RNA recognition and catalysis, while the other monomer binds to the replacement base PreQ1. Requires Zn(2+) as cofactor.

The catalysed reaction is 7-aminomethyl-7-carbaguanine + guanosine(34) in tRNA = 7-aminomethyl-7-carbaguanosine(34) in tRNA + guanine. It functions in the pathway tRNA modification; tRNA-queuosine biosynthesis. Catalyzes the base-exchange of a guanine (G) residue with the queuine precursor 7-aminomethyl-7-deazaguanine (PreQ1) at position 34 (anticodon wobble position) in tRNAs with GU(N) anticodons (tRNA-Asp, -Asn, -His and -Tyr). Catalysis occurs through a double-displacement mechanism. The nucleophile active site attacks the C1' of nucleotide 34 to detach the guanine base from the RNA, forming a covalent enzyme-RNA intermediate. The proton acceptor active site deprotonates the incoming PreQ1, allowing a nucleophilic attack on the C1' of the ribose to form the product. After dissociation, two additional enzymatic reactions on the tRNA convert PreQ1 to queuine (Q), resulting in the hypermodified nucleoside queuosine (7-(((4,5-cis-dihydroxy-2-cyclopenten-1-yl)amino)methyl)-7-deazaguanosine). This Rickettsia prowazekii (strain Madrid E) protein is Queuine tRNA-ribosyltransferase.